Consider the following 357-residue polypeptide: DNA integrity scanning protein DisA (357 aa).

The 139-residue stretch at 8–146 (VKSMINILQL…GNLRYTLKDI (139 aa)) folds into the DAC domain. Residues glycine 75, leucine 93, and 106–110 (MRHRT) contribute to the ATP site.

It belongs to the DisA family. In terms of assembly, homooctamer. It depends on Mg(2+) as a cofactor.

The enzyme catalyses 2 ATP = 3',3'-c-di-AMP + 2 diphosphate. In terms of biological role, participates in a DNA-damage check-point that is active prior to asymmetric division when DNA is damaged. DisA forms globular foci that rapidly scan along the chromosomes during sporulation, searching for lesions. When a lesion is present, DisA pauses at the lesion site. This triggers a cellular response that culminates in a temporary block in sporulation initiation. Also has diadenylate cyclase activity, catalyzing the condensation of 2 ATP molecules into cyclic di-AMP (c-di-AMP). c-di-AMP acts as a signaling molecule that couples DNA integrity with progression of sporulation. The rise in c-di-AMP level generated by DisA while scanning the chromosome, operates as a positive signal that advances sporulation; upon encountering a lesion, the DisA focus arrests at the damaged site and halts c-di-AMP synthesis. The protein is DNA integrity scanning protein DisA of Bacillus cereus (strain ATCC 14579 / DSM 31 / CCUG 7414 / JCM 2152 / NBRC 15305 / NCIMB 9373 / NCTC 2599 / NRRL B-3711).